We begin with the raw amino-acid sequence, 617 residues long: Proline--tRNA ligase (617 aa).

The protein belongs to the class-II aminoacyl-tRNA synthetase family. ProS type 1 subfamily. Homodimer.

The protein resides in the cytoplasm. The enzyme catalyses tRNA(Pro) + L-proline + ATP = L-prolyl-tRNA(Pro) + AMP + diphosphate. In terms of biological role, catalyzes the attachment of proline to tRNA(Pro) in a two-step reaction: proline is first activated by ATP to form Pro-AMP and then transferred to the acceptor end of tRNA(Pro). As ProRS can inadvertently accommodate and process non-cognate amino acids such as alanine and cysteine, to avoid such errors it has two additional distinct editing activities against alanine. One activity is designated as 'pretransfer' editing and involves the tRNA(Pro)-independent hydrolysis of activated Ala-AMP. The other activity is designated 'posttransfer' editing and involves deacylation of mischarged Ala-tRNA(Pro). The misacylated Cys-tRNA(Pro) is not edited by ProRS. This is Proline--tRNA ligase from Streptococcus pneumoniae (strain Hungary19A-6).